Here is a 285-residue protein sequence, read N- to C-terminus: HTH-type transcriptional regulator MurR (285 aa).

One can recognise an HTH rpiR-type domain in the interval 1-77 (MLYLTKISNA…MALIGEYSAS (77 aa)). Positions 37-56 (SRQMAKQLGISQSSIVKFAQ) form a DNA-binding region, H-T-H motif. Residues 128 to 279 (IIEVISKAPF…SLKMIQRSSE (152 aa)) form the SIS domain.

Homotetramer.

It participates in amino-sugar metabolism; N-acetylmuramate degradation [regulation]. Represses the expression of the murPQ operon involved in the uptake and degradation of N-acetylmuramic acid (MurNAc). Binds to two adjacent inverted repeats within the operator region. MurNAc 6-phosphate, the substrate of MurQ, is the specific inducer that weakens binding of MurR to the operator. This is HTH-type transcriptional regulator MurR from Shigella boydii serotype 18 (strain CDC 3083-94 / BS512).